A 962-amino-acid chain; its full sequence is Synphilin-1 (962 aa).

Disordered regions lie at residues 80 to 99, 104 to 137, and 222 to 249; these read SPLK…DQKN, YQKG…EPSQ, and TALR…PAYE. 4 ANK repeats span residues 348-379, 383-412, 418-447, and 455-484; these read NGNN…CLNE, EQLT…AIAE, DFPS…EQGI, and EGNS…NVTM. The stretch at 522–548 forms a coiled coil; it reads VKLTKQLKEQTVERVTLQSQLQQLLEA. A disordered region spans residues 548–590; that stretch reads AQKSEGKSLPSSPSSPSSPASTKSQWKALDTDEESTGKSKVGA. Positions 554 to 571 are enriched in low complexity; sequence KSLPSSPSSPSSPASTKS. The stretch at 602-631 is one ANK 5 repeat; it reads VSSRARTKGKDEDSDKILRQLLGKEISENV. Residues 667–684 show a composition bias toward low complexity; that stretch reads RQLMQRSLSESDTDSNNS. A disordered region spans residues 667–852; the sequence is RQLMQRSLSE…QRTSESGEQM (186 aa). Residues 685–699 are compositionally biased toward basic and acidic residues; it reads EDPKNTPVKRADRPR. Residues 698-728 form an ANK 6 repeat; sequence PRPQPIVESVENVDSAESLHLMIKKHSLASG. A compositionally biased stretch (polar residues) spans 772 to 790; it reads PSTEATQSSPDSTAAQKVA. A compositionally biased stretch (basic and acidic residues) spans 831-840; it reads NGEKDKDKGR.

As to quaternary structure, associates with SNCA, RNF19A and PRKN. Ubiquitinated; mediated by SIAH1 or RNF19A and leading to its subsequent proteasomal degradation.

The polypeptide is Synphilin-1 (Sncaip) (Mus musculus (Mouse)).